A 102-amino-acid polypeptide reads, in one-letter code: Small ribosomal subunit protein uS10 (102 aa).

A disordered region spans residues 37 to 61 (PIPLPTKSLKITTRKSTDGEGSSSF).

It belongs to the universal ribosomal protein uS10 family. Part of the 30S ribosomal subunit.

Functionally, involved in the binding of tRNA to the ribosomes. This is Small ribosomal subunit protein uS10 from Methanococcus vannielii (strain ATCC 35089 / DSM 1224 / JCM 13029 / OCM 148 / SB).